An 86-amino-acid polypeptide reads, in one-letter code: Cell division topological specificity factor (86 aa).

The protein belongs to the MinE family.

Prevents the cell division inhibition by proteins MinC and MinD at internal division sites while permitting inhibition at polar sites. This ensures cell division at the proper site by restricting the formation of a division septum at the midpoint of the long axis of the cell. This chain is Cell division topological specificity factor, found in Rhizobium rhizogenes (strain K84 / ATCC BAA-868) (Agrobacterium radiobacter).